Here is a 147-residue protein sequence, read N- to C-terminus: Hemoglobin subunit gamma (147 aa).

The 145-residue stretch at 3–147 folds into the Globin domain; sequence NFTAEDKAAI…VASALASRYH (145 aa). Heme b contacts are provided by histidine 64 and histidine 93.

This sequence belongs to the globin family. As to quaternary structure, heterotetramer of two alpha chains and two gamma chains in fetal hemoglobin (Hb F). As to expression, red blood cells.

Its function is as follows. Gamma chains make up the fetal hemoglobin F, in combination with alpha chains. This chain is Hemoglobin subunit gamma (HBG1), found in Callithrix jacchus (White-tufted-ear marmoset).